The following is a 68-amino-acid chain: Protein VNG_1110C (68 aa).

The chain is Protein VNG_1110C from Halobacterium salinarum (strain ATCC 700922 / JCM 11081 / NRC-1) (Halobacterium halobium).